The chain runs to 203 residues: ATP-dependent Clp protease proteolytic subunit (203 aa).

Residue Ser107 is the Nucleophile of the active site. His132 is an active-site residue.

The protein belongs to the peptidase S14 family. In terms of assembly, fourteen ClpP subunits assemble into 2 heptameric rings which stack back to back to give a disk-like structure with a central cavity, resembling the structure of eukaryotic proteasomes.

The protein localises to the cytoplasm. It carries out the reaction Hydrolysis of proteins to small peptides in the presence of ATP and magnesium. alpha-casein is the usual test substrate. In the absence of ATP, only oligopeptides shorter than five residues are hydrolyzed (such as succinyl-Leu-Tyr-|-NHMec, and Leu-Tyr-Leu-|-Tyr-Trp, in which cleavage of the -Tyr-|-Leu- and -Tyr-|-Trp bonds also occurs).. Cleaves peptides in various proteins in a process that requires ATP hydrolysis. Has a chymotrypsin-like activity. Plays a major role in the degradation of misfolded proteins. This Shewanella piezotolerans (strain WP3 / JCM 13877) protein is ATP-dependent Clp protease proteolytic subunit.